The chain runs to 576 residues: V-type ATP synthase alpha chain (576 aa).

238–245 (GPFGAGKT) provides a ligand contact to ATP.

This sequence belongs to the ATPase alpha/beta chains family.

The enzyme catalyses ATP + H2O + 4 H(+)(in) = ADP + phosphate + 5 H(+)(out). Functionally, produces ATP from ADP in the presence of a proton gradient across the membrane. The V-type alpha chain is a catalytic subunit. The polypeptide is V-type ATP synthase alpha chain (Borrelia recurrentis (strain A1)).